Here is a 467-residue protein sequence, read N- to C-terminus: Spermatogenesis- and oogenesis-specific basic helix-loop-helix-containing protein 2 (467 aa).

The 52-residue stretch at 200–251 (QASFLHSTKEKLRRERIKSCCEQLRTLLPYVKGRKSDVASVIEATVDYVKQV) folds into the bHLH domain. A compositionally biased stretch (low complexity) spans 443–453 (ASASDHQASQP). The disordered stretch occupies residues 443–467 (ASASDHQASQPPALPSPQPHDSSYF).

Forms both hetero- and homodimers with SOHLH1. Preferentially expressed in the adult ovary and testis. Expressed in the majority of spermatogonia in adult animals, but not in the most undifferentiated spermatogonial population.

It localises to the nucleus. The protein localises to the cytoplasm. Transcription regulator of both male and female germline differentiation. Suppresses genes involved in spermatogonial stem cells maintenance, and induces genes important for spermatogonial differentiation. Coordinates oocyte differentiation without affecting meiosis I. The chain is Spermatogenesis- and oogenesis-specific basic helix-loop-helix-containing protein 2 (Sohlh2) from Mus musculus (Mouse).